The chain runs to 665 residues: F-box/WD repeat-containing protein lin-23 (665 aa).

Residues 81–127 form the F-box domain; that stretch reads RDFISNLPAHLVELILFNVNSDSLKSCEEVSTSWRCALARGQHWKKL. WD repeat units lie at residues 220–257, 260–299, 301–337, 343–380, 383–420, 423–460, and 472–509; these read ENSK…CSRI, GHTG…KTLI, HCEA…DITI, GHRA…FVRT, GHRR…CLRV, GHEE…DPRA, and QHTG…PSGL. The disordered stretch occupies residues 574 to 665; the sequence is AAAEAARGAG…VDEEMPDGGP (92 aa). Acidic residues-rich tracts occupy residues 584-595 and 655-665; these read DNDESSSEEDLD and DVDEEMPDGGP.

Part of a SCF (SKP1-cullin-F-box) protein ligase complex.

The protein localises to the cytoplasm. Functionally, functions cell autonomously to negatively regulate cell cycle progression. Required to restrain cell proliferation in response to developmental cues. Probably recognizes and binds to some proteins and promotes their ubiquitination and degradation. The polypeptide is F-box/WD repeat-containing protein lin-23 (lin-23) (Caenorhabditis elegans).